The primary structure comprises 389 residues: 8-amino-7-oxononanoate synthase (389 aa).

Arg-23 lines the substrate pocket. Residue Gly-114–Tyr-115 coordinates pyridoxal 5'-phosphate. His-139 serves as a coordination point for substrate. Residues Ser-185, His-213, and Thr-242 each coordinate pyridoxal 5'-phosphate. N6-(pyridoxal phosphate)lysine is present on Lys-245. Thr-357 is a binding site for substrate.

This sequence belongs to the class-II pyridoxal-phosphate-dependent aminotransferase family. BioF subfamily. As to quaternary structure, homodimer. Requires pyridoxal 5'-phosphate as cofactor.

The catalysed reaction is 6-carboxyhexanoyl-[ACP] + L-alanine + H(+) = (8S)-8-amino-7-oxononanoate + holo-[ACP] + CO2. Its pathway is cofactor biosynthesis; biotin biosynthesis. Its function is as follows. Catalyzes the decarboxylative condensation of pimeloyl-[acyl-carrier protein] and L-alanine to produce 8-amino-7-oxononanoate (AON), [acyl-carrier protein], and carbon dioxide. This is 8-amino-7-oxononanoate synthase from Acidithiobacillus ferrooxidans (strain ATCC 23270 / DSM 14882 / CIP 104768 / NCIMB 8455) (Ferrobacillus ferrooxidans (strain ATCC 23270)).